Reading from the N-terminus, the 350-residue chain is Guanine nucleotide-binding protein G(t) subunit alpha-1 (350 aa).

A disordered region spans residues 1-21 (MGAGASAEEKHSRELEKKLKE). Residue Gly2 is the site of N-myristoyl glycine attachment. The span at 7 to 21 (AEEKHSRELEKKLKE) shows a compositional bias: basic and acidic residues. A G-alpha domain is found at 28-350 (RTVKLLLLGA…KENLKDCGLF (323 aa)). Positions 31–44 (KLLLLGAGESGKST) are G1 motif. Residue 36–43 (GAGESGKS) participates in GTP binding. A Mg(2+)-binding site is contributed by Ser43. A Phosphotyrosine modification is found at Tyr142. Residues Asp146, 171–177 (LRSRVKT), Gly199, 265–268 (NKKD), and Ala322 each bind GTP. The G2 motif stretch occupies residues 169–177 (DVLRSRVKT). Thr177 contributes to the Mg(2+) binding site. Positions 192 to 201 (FRMFDVGGQR) are G3 motif. The segment at 261 to 268 (VLFLNKKD) is G4 motif. A G5 motif region spans residues 320 to 325 (TCATDT). Positions 340–350 (IKENLKDCGLF) are interaction with RHO.

In terms of assembly, heterotrimeric G proteins are composed of 3 subunits alpha, beta and gamma. The alpha chain contains the guanine nucleotide binding site. Interacts with RHO. Interacts with RGS9 and PDE6G. Interacts (when myristoylated) with UNC119; interaction is required for localization in sensory neurons. As to expression, rod.

The protein resides in the cell projection. Its subcellular location is the cilium. It is found in the photoreceptor outer segment. The protein localises to the membrane. It localises to the photoreceptor inner segment. Functionally, functions as a signal transducer for the rod photoreceptor RHO. Required for normal RHO-mediated light perception by the retina. Guanine nucleotide-binding proteins (G proteins) function as transducers downstream of G protein-coupled receptors (GPCRs), such as the photoreceptor RHO. The alpha chain contains the guanine nucleotide binding site and alternates between an active, GTP-bound state and an inactive, GDP-bound state. Activated RHO promotes GDP release and GTP binding. Signaling is mediated via downstream effector proteins, such as cGMP-phosphodiesterase. The protein is Guanine nucleotide-binding protein G(t) subunit alpha-1 (GNAT1) of Bos taurus (Bovine).